Consider the following 165-residue polypeptide: Nucleotide-binding protein PMM0481 (165 aa).

The protein belongs to the YajQ family.

Nucleotide-binding protein. The polypeptide is Nucleotide-binding protein PMM0481 (Prochlorococcus marinus subsp. pastoris (strain CCMP1986 / NIES-2087 / MED4)).